Here is a 102-residue protein sequence, read N- to C-terminus: 10 kDa heat shock protein, mitochondrial (102 aa).

At Ala-2 the chain carries N-acetylalanine. The residue at position 8 (Lys-8) is an N6-acetyllysine. At Lys-28 the chain carries N6-succinyllysine. The residue at position 40 (Lys-40) is an N6-acetyllysine; alternate. 3 positions are modified to N6-malonyllysine; alternate: Lys-40, Lys-54, and Lys-56. Lys-40, Lys-54, Lys-56, Lys-66, and Lys-70 each carry N6-succinyllysine; alternate. N6-acetyllysine; alternate occurs at positions 56, 66, and 70. Position 79 is a phosphothreonine (Thr-79). N6-acetyllysine; alternate occurs at positions 80 and 86. N6-succinyllysine; alternate occurs at positions 80 and 86. The residue at position 99 (Lys-99) is an N6-acetyllysine.

The protein belongs to the GroES chaperonin family. As to quaternary structure, homoheptamer arranged in a ring structure. 2 heptameric Hsp10 rings interact with a Hsp60 tetradecamer in the structure of a back-to-back double heptameric ring to form the symmetrical football complex.

The protein localises to the mitochondrion matrix. In terms of biological role, co-chaperonin implicated in mitochondrial protein import and macromolecular assembly. Together with Hsp60, facilitates the correct folding of imported proteins. May also prevent misfolding and promote the refolding and proper assembly of unfolded polypeptides generated under stress conditions in the mitochondrial matrix. The functional units of these chaperonins consist of heptameric rings of the large subunit Hsp60, which function as a back-to-back double ring. In a cyclic reaction, Hsp60 ring complexes bind one unfolded substrate protein per ring, followed by the binding of ATP and association with 2 heptameric rings of the co-chaperonin Hsp10. This leads to sequestration of the substrate protein in the inner cavity of Hsp60 where, for a certain period of time, it can fold undisturbed by other cell components. Synchronous hydrolysis of ATP in all Hsp60 subunits results in the dissociation of the chaperonin rings and the release of ADP and the folded substrate protein. This Bos taurus (Bovine) protein is 10 kDa heat shock protein, mitochondrial (HSPE1).